The primary structure comprises 490 residues: MAGKQNQAAPKKAVAPRQQHYEFGGPIGAFGITFGLPILVHVFNLFCNDISGCPAPSLLHPKSLDLAQLKREIGWPDNGVFGLFSWSATLWTLGYYALSLVQYRFLPGHHVEGTELSTGGRLKYKLNAFNSAMCTLAILAAGTIAQGAEFPVWTFISDNFAQIISANILFAFALAIFVYVRSFDVKPGNKDMRQLAAGGVTGSLIYDFYIGRELNPRITLPLIGQVDIKEFMEMRPGLLGWIILNCAFIAKQYRLYGYVTDSILFITAIQAFYVFDGIYMEPAVLTTMDITTDGFGFMLSFGDVVWVPFMYSTQTRYLSVHPQQLGAFGLIAVGAVLAAGYSIFRLSNSQKNNFRTNPEDPSVKHLTYLQTKTGSRLITSGWWGIARHINYLGDWLQSWPYSLPTGIAGYQILSAGSNAPGAITMLDGREVVQGEARGWGIVFTYFYILYFAILLIHRDLRDDEKCSKKYGDDWEKYKKLVKWRIVPGIY.

7 helical membrane passes run 23–43 (FGGPIGAFGITFGLPILVHVF), 80–100 (VFGLFSWSATLWTLGYYALSL), 136–156 (LAILAAGTIAQGAEFPVWTFI), 160–180 (FAQIISANILFAFALAIFVYV), 230–250 (EFMEMRPGLLGWIILNCAFIA), 255–275 (LYGYVTDSILFITAIQAFYVF), and 324–344 (QLGAFGLIAVGAVLAAGYSIF). Residues Lys351, Arg355, Ile378, Trp383, and 390-391 (NY) contribute to the NADP(+) site. The chain crosses the membrane as a helical span at residues 436 to 456 (ARGWGIVFTYFYILYFAILLI). NADP(+) is bound by residues Asp462, 466-470 (CSKKY), and Tyr477.

Belongs to the ERG4/ERG24 family.

The protein localises to the membrane. It carries out the reaction 4,4-dimethyl-5alpha-cholesta-8,24-dien-3beta-ol + NADP(+) = 4,4-dimethyl-5alpha-cholesta-8,14,24-trien-3beta-ol + NADPH + H(+). Its pathway is steroid biosynthesis; zymosterol biosynthesis; zymosterol from lanosterol: step 2/6. Functionally, reduces the C14=C15 double bond of 4,4-dimethyl-cholesta-8,14,24-trienol to produce 4,4-dimethyl-cholesta-8,24-dienol. The sequence is that of Delta(14)-sterol reductase (erg-3) from Neurospora crassa (strain ATCC 24698 / 74-OR23-1A / CBS 708.71 / DSM 1257 / FGSC 987).